The chain runs to 415 residues: uncharacterized protein (415 aa).

Transmembrane regions (helical) follow at residues 20–40, 43–63, 78–98, 109–129, 155–175, 243–263, 300–320, 328–348, 360–380, and 388–408; these read MAYLFYFITAFLLGTEAFGIL, LMPIADTLTIFFSSGIPPAIA, IPILYLMILLSVVGFILTPYI, LPNILYFAVGLCVVASTVIAF, VILVFILTLYLGIFGSLLSIS, IVIMSIMGGFWSGIYGYSSLI, IFSSIFVIGCLFFPEIPLIAF, GILCLRILAISSLFMSYYTLI, ISFYIILFGLVLNIILNLILV, and GSLATLITSISVFLIGVFAIL.

Belongs to the polysaccharide synthase family.

The protein localises to the cell membrane. This is an uncharacterized protein from Methanocaldococcus jannaschii (strain ATCC 43067 / DSM 2661 / JAL-1 / JCM 10045 / NBRC 100440) (Methanococcus jannaschii).